The chain runs to 2922 residues: Small ribosomal subunit protein uS4c (2922 aa).

Residues 111–174 enclose the S4 RNA-binding domain; that stretch reads MRLDNIVFRL…ISMELVSRFL (64 aa).

Belongs to the universal ribosomal protein uS4 family. As to quaternary structure, part of the 30S ribosomal subunit. Contacts protein S5. The interaction surface between S4 and S5 is involved in control of translational fidelity.

Its subcellular location is the plastid. The protein localises to the chloroplast. One of the primary rRNA binding proteins, it binds directly to 16S rRNA where it nucleates assembly of the body of the 30S subunit. Functionally, with S5 and S12 plays an important role in translational accuracy. This chain is Small ribosomal subunit protein uS4c (rps4), found in Stigeoclonium helveticum (Green alga).